The following is a 496-amino-acid chain: DNA-dependent metalloprotease SPRTN (496 aa).

An N-acetylmethionine modification is found at M1. Positions 45–212 (LQALFLQFND…KTCGGTYIKI (168 aa)) constitute a SprT-like domain. H111 is a Zn(2+) binding site. The active site involves E112. The Zn(2+) site is built by H115 and H130. An N6-acetyllysine modification is found at K230. The SHP-box motif lies at 253-261 (FSGKGYVLG). S268 is modified (phosphoserine). K303 participates in a covalent cross-link: Glycyl lysine isopeptide (Lys-Gly) (interchain with G-Cter in SUMO2). A PIP-box motif is present at residues 326 to 333 (QSVLSSYF). Residue K342 forms a Glycyl lysine isopeptide (Lys-Gly) (interchain with G-Cter in SUMO2); alternate linkage. A Glycyl lysine isopeptide (Lys-Gly) (interchain with G-Cter in ubiquitin); alternate cross-link involves residue K342. Positions 346–459 (NVNGSPVKSG…STPRSSGGQR (114 aa)) are disordered. K361 participates in a covalent cross-link: Glycyl lysine isopeptide (Lys-Gly) (interchain with G-Cter in SUMO2). Residues 382 to 403 (SSKVTAPASATVTSAAGTSAAI) are compositionally biased toward low complexity. S383 carries the post-translational modification Phosphoserine. The Nuclear localization signal motif lies at 412-423 (DQFLNKRPRLED). Polar residues-rich tracts occupy residues 426–437 (ALNNIKEQTQSG) and 445–457 (RPTA…SSGG). Residue K431 forms a Glycyl lysine isopeptide (Lys-Gly) (interchain with G-Cter in SUMO2) linkage. The UBZ4-type zinc-finger motif lies at 461-488 (LVNCPVCQGVVLESQINEHLDRCLEGSK). C464, C467, H479, and C483 together coordinate Zn(2+).

It belongs to the Spartan family. As to quaternary structure, homodimer. Interacts (VIA PIP-box) with PCNA (when ubiquitinated). Interacts (via its SHP-box) with VCP/p97. Interacts with RAD18. Interacts with KCTD13 and POLD3. Zn(2+) is required as a cofactor. Post-translationally, autocatalytically cleaved in response to double-stranded DNA-binding: autocatalytic cleavage takes place in trans and leads to inactivation. In terms of processing, monoubiquitinated; monoubiquitination promotes exclusion from chromatin. Deubiquitinated by VCPIP1: deubiquitination is required for subsequent acetylation and recruitment to chromatin and DNA damage sites. Acetylated following deubiquitination by VCPIP1, leading to recruitment to chromatin and DNA damage sites. Post-translationally, phosphorylation by CHEK1 promotes recruitment to chromatin.

Its subcellular location is the nucleus. The protein localises to the chromosome. Its activity is regulated as follows. DNA-binding activates the protease activity: single-stranded DNA-binding specifically activates ability to cleave covalent DNA-protein cross-links (DPCs). In contrast, double-stranded DNA-binding specifically activates autocatalytic cleavage, and subsequent inactivation. DNA-dependent metalloendopeptidase that mediates the proteolytic cleavage of covalent DNA-protein cross-links (DPCs) during DNA synthesis, thereby playing a key role in maintaining genomic integrity. DPCs are highly toxic DNA lesions that interfere with essential chromatin transactions, such as replication and transcription, and which are induced by reactive agents, such as UV light or formaldehyde. Associates with the DNA replication machinery and specifically removes DPCs during DNA synthesis. Catalyzes proteolytic cleavage of the HMCES DNA-protein cross-link following unfolding by the BRIP1/FANCJ helicase. Acts as a pleiotropic protease for DNA-binding proteins cross-linked with DNA, such as TOP1, TOP2A, histones H3 and H4. Mediates degradation of DPCs that are not ubiquitinated, while it is not able to degrade ubiquitinated DPCs. SPRTN activation requires polymerase collision with DPCs followed by helicase bypass of DPCs. Involved in recruitment of VCP/p97 to sites of DNA damage. Also acts as an activator of CHEK1 during normal DNA replication by mediating proteolytic cleavage of CHEK1, thereby promoting CHEK1 removal from chromatin and subsequent activation. Does not activate CHEK1 in response to DNA damage. May also act as a 'reader' of ubiquitinated PCNA: recruited to sites of UV damage and interacts with ubiquitinated PCNA and RAD18, the E3 ubiquitin ligase that monoubiquitinates PCNA. Facilitates chromatin association of RAD18 and is required for efficient PCNA monoubiquitination, promoting a feed-forward loop to enhance PCNA ubiquitination and translesion DNA synthesis. The polypeptide is DNA-dependent metalloprotease SPRTN (Rattus norvegicus (Rat)).